The sequence spans 69 residues: Conotoxin Eb6.19 (69 aa).

The first 17 residues, 1-17 (VLIIAVLFLTACQLTTA), serve as a signal peptide directing secretion. A propeptide spanning residues 18–41 (ETYSRGRQKHRARRSTDKNSKWTR) is cleaved from the precursor. 3 disulfide bridges follow: Cys-43/Cys-57, Cys-50/Cys-61, and Cys-56/Cys-68.

Belongs to the conotoxin O1 superfamily. As to expression, expressed by the venom duct.

The protein localises to the secreted. This chain is Conotoxin Eb6.19 (E1), found in Conus ebraeus (Hebrew cone).